Here is a 147-residue protein sequence, read N- to C-terminus: Cyanate hydratase (147 aa).

Catalysis depends on residues Arg88, Glu91, and Ser114.

This sequence belongs to the cyanase family.

It carries out the reaction cyanate + hydrogencarbonate + 3 H(+) = NH4(+) + 2 CO2. In terms of biological role, catalyzes the reaction of cyanate with bicarbonate to produce ammonia and carbon dioxide. The sequence is that of Cyanate hydratase from Variovorax paradoxus (strain S110).